Here is a 368-residue protein sequence, read N- to C-terminus: NAD(P)H-quinone oxidoreductase subunit 1, chloroplastic (368 aa).

9 helical membrane-spanning segments follow: residues 27–47 (FLWIIFSILILMLGVTIGVLV), 97–117 (WLFNIGPILVLIPVFLSYLVI), 130–150 (IGVFFWIAVSSVVPLGLLMAG), 166–186 (AAQSISYEIPLALSVLSIALL), 204–224 (FLSWNLWRQPIGFIVFFIASL), 249–269 (YSGMKFAFFYLASYLNLLVSS), 270–290 (LFVTILYLGGWHFSIPFFSLF), 305–325 (VISIIIGIVITLVKSYLFLFI), and 348–368 (FLLPIALGNLLLTTSFQLFLL).

This sequence belongs to the complex I subunit 1 family. In terms of assembly, NDH is composed of at least 16 different subunits, 5 of which are encoded in the nucleus.

The protein resides in the plastid. The protein localises to the chloroplast thylakoid membrane. The enzyme catalyses a plastoquinone + NADH + (n+1) H(+)(in) = a plastoquinol + NAD(+) + n H(+)(out). The catalysed reaction is a plastoquinone + NADPH + (n+1) H(+)(in) = a plastoquinol + NADP(+) + n H(+)(out). In terms of biological role, NDH shuttles electrons from NAD(P)H:plastoquinone, via FMN and iron-sulfur (Fe-S) centers, to quinones in the photosynthetic chain and possibly in a chloroplast respiratory chain. The immediate electron acceptor for the enzyme in this species is believed to be plastoquinone. Couples the redox reaction to proton translocation, and thus conserves the redox energy in a proton gradient. The polypeptide is NAD(P)H-quinone oxidoreductase subunit 1, chloroplastic (Marchantia polymorpha (Common liverwort)).